We begin with the raw amino-acid sequence, 413 residues long: Phosphoribosylamine--glycine ligase (413 aa).

One can recognise an ATP-grasp domain in the interval 108–310 (KQLMDKYRIP…LMQLIIDLEN (203 aa)). ATP is bound at residue 134 to 190 (VETCDLPIVIKKDGLAAGKGVIIAFTREDALDGVKKIYQEEKGKVVFESYLEGEEFS). 2 residues coordinate Mg(2+): E280 and N282.

Belongs to the GARS family. It depends on Mg(2+) as a cofactor. The cofactor is Mn(2+).

The enzyme catalyses 5-phospho-beta-D-ribosylamine + glycine + ATP = N(1)-(5-phospho-beta-D-ribosyl)glycinamide + ADP + phosphate + H(+). It functions in the pathway purine metabolism; IMP biosynthesis via de novo pathway; N(1)-(5-phospho-D-ribosyl)glycinamide from 5-phospho-alpha-D-ribose 1-diphosphate: step 2/2. This is Phosphoribosylamine--glycine ligase from Staphylococcus epidermidis (strain ATCC 12228 / FDA PCI 1200).